The chain runs to 339 residues: Probable protein phosphatase 2C 28 (339 aa).

The 248-residue stretch at 87–334 folds into the PPM-type phosphatase domain; it reads DHGYHLVKGQ…DDISCVVVSF (248 aa). Residues Asp-124, Gly-125, Asp-286, and Asp-325 each coordinate Mn(2+).

Belongs to the PP2C family. Mg(2+) is required as a cofactor. Mn(2+) serves as cofactor.

The catalysed reaction is O-phospho-L-seryl-[protein] + H2O = L-seryl-[protein] + phosphate. It carries out the reaction O-phospho-L-threonyl-[protein] + H2O = L-threonyl-[protein] + phosphate. This chain is Probable protein phosphatase 2C 28, found in Arabidopsis thaliana (Mouse-ear cress).